Here is a 502-residue protein sequence, read N- to C-terminus: L-arabinose isomerase (502 aa).

Mn(2+) is bound by residues glutamate 307, glutamate 334, histidine 351, and histidine 450.

This sequence belongs to the arabinose isomerase family. Mn(2+) serves as cofactor.

The catalysed reaction is beta-L-arabinopyranose = L-ribulose. It functions in the pathway carbohydrate degradation; L-arabinose degradation via L-ribulose; D-xylulose 5-phosphate from L-arabinose (bacterial route): step 1/3. Its function is as follows. Catalyzes the conversion of L-arabinose to L-ribulose. This is L-arabinose isomerase from Nocardioides sp. (strain ATCC BAA-499 / JS614).